We begin with the raw amino-acid sequence, 444 residues long: Homocysteine/cysteine synthase (444 aa).

At Ser-44 the chain carries Phosphoserine. Residue Lys-160 forms a Glycyl lysine isopeptide (Lys-Gly) (interchain with G-Cter in ubiquitin) linkage. Position 209 is an N6-(pyridoxal phosphate)lysine (Lys-209).

It belongs to the trans-sulfuration enzymes family. Homotetramer. It depends on pyridoxal 5'-phosphate as a cofactor.

It localises to the cytoplasm. The enzyme catalyses O-acetyl-L-homoserine + methanethiol = L-methionine + acetate + H(+). It carries out the reaction O-acetyl-L-homoserine + hydrogen sulfide = L-homocysteine + acetate. The catalysed reaction is O-acetyl-L-serine + hydrogen sulfide = L-cysteine + acetate. It functions in the pathway amino-acid biosynthesis; L-methionine biosynthesis via de novo pathway; L-homocysteine from O-acetyl-L-homoserine. Functionally, catalyzes the conversion of O-acetyl-L-homoserine (OAH) into homocysteine in the methionine biosynthesis pathway. Required to efficiently reduce toxic levels of hydrogen sulfide generated when the sulfate assimilation pathway (SAP) is active. Also catalyzes the conversion of O-acetylserine (OAS) into cysteine, the last step in the cysteine biosynthesis pathway. However, it seems that in S.cerevisiae cysteine biosynthesis occurs exclusively through the cystathionine pathway and not via direct incorporation of sulfur into OAS. It therefore has no metabolic role in cysteine biosynthesis and may only have a regulatory role controlling OAS levels. The protein is Homocysteine/cysteine synthase of Saccharomyces cerevisiae (strain ATCC 204508 / S288c) (Baker's yeast).